Here is a 1257-residue protein sequence, read N- to C-terminus: MDQAKGYEHVRYTAPDPRDEGLGSINQRFSHDSSTNVNTYVRPPDYGVSTPARPVLNYSIQTGEEFAFEFMRDRVIMKPQFIPNVYGEHSGMPVSVNLSALGMVHPMSESGPNATVLNIEEKRQSFEHERKPPSRIEDKTYHELVQSAPVISSKNDTGQRRHSLVSSRASDSSLNRAKFLCSFGGKVIPRPRDQKLRYVGGETRIIRISKTISFQELMHKMKEIFPEARTIKYQLPGEDLDALVSVSSDEDLQNMMEECIVFGNGGSEKPRMFLFSSSDIEEAQFVMEHAEGDSEVQYVVAVNGMDLSSRRSSLGLSPPGNNLDELLHGNFDRKIDRAATEPAVASLTPLAGNESLPASQTSQPVTGFSTGNEPFSQPYLGQQLQFPGLGNHQIYTSGHMASIGYIDEKRSAPLHVQPQPHYIPYSVNPETPLESLVPHYPQKPEQGFLREEQIFHVQDPETSSKEAKMRRDDSFQKVNDHPISTVESNLSAKEPKMRRESSTPRVNEYPVSSMPSDLIVPDDLPKEEAPIVTQTSSSTPDPSSSTLSEKSLRKSEDHVENNLSAKEPKMRKEHSTTRVNEYSVSSVSSDSMVPDQALKEEAPISMKISNSTPDPKSLVYPEKSLRTSQEKTGAFDTTNEGMKKNQDNQFCLLGGFSVSGHGTSNNSSSNVSNFDQPVTQQRVFHSERTVRDPTETNRLSKSDDSLASQFVMAQTTSDAFLPISESSETSHEANMESQNVHPTAPVIPAPDSIWTAEGSMSQSEKKNVETNTPEHVSQTETSAKAVPQGHNEKGDIVVDINDRFPREFLADILKTKESLNFPGLGPLHADGAGVSLNIQNNDPKTWSYFRNLAQDEFERKDLSLMDQDHPGFPTSMTNTNGVPIDYSYPPLQSEKVASSQIHPQIHFDGNIKPDVSTITIPDLNTVDTQEDYSQSQIKGAESTDATLNAGVPLIDFMAADSGMRSLQVIKNDDLEELKELGSGTFGTVYHGKWRGTDVAIKRIKRSCFIGRSSEQERLTSEFWHEAEILSKLHHPNVMAFYGVVKDGPGGTLATVTEYMVNGSLRHVLLSNRHLDRRKRLIIAMDAAFGMEYLHSKSIVHFDLKCDNLLVNLKDPARPICKVGDFGLSKIKRNTLVTGGVRGTLPWMAPELLSGSSSKVSEKVDVFSFGIVLWEILTGEEPYANMHYGAIIGGIVNNTLRPTVPNYCDPEWRMLMEQCWAPDPFVRPAFPEIARRLRTMSSSAVHTKPHAVNHQIHK.

Residues 1-21 (MDQAKGYEHVRYTAPDPRDEG) form a disordered region. The PB1 domain maps to 191–277 (PRDQKLRYVG…EKPRMFLFSS (87 aa)). Basic and acidic residues-rich tracts occupy residues 457–480 (VQDP…KVND) and 493–502 (KEPKMRRESS). Disordered regions lie at residues 457–629 (VQDP…RTSQ) and 761–789 (SQSE…VPQG). S474 is subject to Phosphoserine. Residues 533–548 (TQTSSSTPDPSSSTLS) are compositionally biased toward low complexity. Over residues 550 to 576 (KSLRKSEDHVENNLSAKEPKMRKEHST) the composition is skewed to basic and acidic residues. S555 is subject to Phosphoserine. The span at 583–593 (SVSSVSSDSMV) shows a compositional bias: low complexity. The span at 769 to 782 (ETNTPEHVSQTETS) shows a compositional bias: polar residues. S777 bears the Phosphoserine mark. Residues 974–1239 (LEELKELGSG…PEIARRLRTM (266 aa)) enclose the Protein kinase domain. ATP is bound by residues 980-988 (LGSGTFGTV) and K1001. S1013 bears the Phosphoserine mark. The Proton acceptor role is filled by D1102.

It belongs to the protein kinase superfamily. Ser/Thr protein kinase family. Hyperphosphorylated in response to auxin in an ABP1- and TMK1-dependent manner.

It is found in the cytoplasm. It catalyses the reaction L-seryl-[protein] + ATP = O-phospho-L-seryl-[protein] + ADP + H(+). It carries out the reaction L-threonyl-[protein] + ATP = O-phospho-L-threonyl-[protein] + ADP + H(+). With respect to regulation, activated by auxin via rapid phosphorylation downstream of ABP1 and TMK1 signaling. Its function is as follows. RAF-like protein kinase acting, together with RAF20, as a central mediator of a fast response pathway to auxin involving proteins phosphorylation, and leading to rapid cellular responses including membrane depolarization and cytoplasmic streaming. Required for general growth and developmental process. This is RAF-like serine/threonine-protein kinase 24 from Arabidopsis thaliana (Mouse-ear cress).